Here is a 340-residue protein sequence, read N- to C-terminus: MAASSSEISEMKGVEESPKVPGEGPGHSEAETGPPQVLAGVPDQPEAPQPGPNTTAAPVDSGPKAGLAPETTETPAGASETAQATDLSLSPGGESKANCSPEDPCQETVSKPEVSKEATADQGSRLESAAPPEPAPEPAPQPDPRPDSQPTPKPALQPELPTQEDPTPEILSESVGEKQENGAVVPLQAGDGEEGPAPEPHSPPSKKSPPANGAPPRVLQQLVEEDRMRRAHSGHPGSPRGSLSRHPSSQLAGPGVEGGEGTQKPRDYIILAILSCFCPMWPVNIVAFAYAVMSRNSLQQGDVDGAQRLGRVAKLLSIVALVGGVLIIIASCVINLGVYK.

Residues 1-261 (MAASSSEISE…AGPGVEGGEG (261 aa)) form a disordered region. Topologically, residues 1-268 (MAASSSEISE…GEGTQKPRDY (268 aa)) are cytoplasmic. The span at 9–18 (SEMKGVEESP) shows a compositional bias: basic and acidic residues. The residue at position 28 (S28) is a Phosphoserine. T74 is modified (phosphothreonine). Composition is skewed to pro residues over residues 131–155 (PPEPAPEPAPQPDPRPDSQPTPKPA) and 197–207 (APEPHSPPSKK). S238 bears the Phosphoserine mark. R240 carries the omega-N-methylarginine modification. 2 positions are modified to phosphoserine: S248 and S249. An intramembrane region (helical) is located at residues 269–289 (IILAILSCFCPMWPVNIVAFA). The Cytoplasmic portion of the chain corresponds to 290 to 317 (YAVMSRNSLQQGDVDGAQRLGRVAKLLS). The helical transmembrane segment at 318-338 (IVALVGGVLIIIASCVINLGV) threads the bilayer. At 339 to 340 (YK) the chain is on the extracellular side.

The protein belongs to the CD225/Dispanin family. As to quaternary structure, component of the outer core of AMPAR complex. AMPAR complex consists of an inner core made of 4 pore-forming GluA/GRIA proteins (GRIA1, GRIA2, GRIA3 and GRIA4) and 4 major auxiliary subunits arranged in a twofold symmetry. One of the two pairs of distinct binding sites is occupied either by CNIH2, CNIH3 or CACNG2, CACNG3. The other harbors CACNG2, CACNG3, CACNG4, CACNG8 or GSG1L. This inner core of AMPAR complex is complemented by outer core constituents binding directly to the GluA/GRIA proteins at sites distinct from the interaction sites of the inner core constituents. Outer core constituents include at least PRRT1, PRRT2, CKAMP44/SHISA9, FRRS1L and NRN1. The proteins of the inner and outer core serve as a platform for other, more peripherally associated AMPAR constituents. Alone or in combination, these auxiliary subunits control the gating and pharmacology of the AMPAR complex and profoundly impact their biogenesis and protein processing. Interacts with intersectin 1/ITSN1. Interacts with SNARE complex components, including SNAP25, STX1A, SYT1 and SYT2; this interaction may inhibit SNARE complex formation.

It localises to the cell membrane. It is found in the presynaptic cell membrane. The protein localises to the synapse. Its subcellular location is the cell projection. The protein resides in the axon. It localises to the cytoplasmic vesicle. It is found in the secretory vesicle. The protein localises to the synaptic vesicle membrane. Its subcellular location is the postsynaptic density membrane. The protein resides in the dendritic spine. As a component of the outer core of AMPAR complex, may be involved in synaptic transmission in the central nervous system. In hippocampal neurons, in presynaptic terminals, plays an important role in the final steps of neurotransmitter release, possibly by regulating Ca(2+)-sensing. In the cerebellum, may inhibit SNARE complex formation and down-regulate short-term facilitation. The sequence is that of Proline-rich transmembrane protein 2 (PRRT2) from Homo sapiens (Human).